A 241-amino-acid chain; its full sequence is Probable transcriptional regulatory protein NE0210 (241 aa).

This sequence belongs to the TACO1 family.

Its subcellular location is the cytoplasm. The polypeptide is Probable transcriptional regulatory protein NE0210 (Nitrosomonas europaea (strain ATCC 19718 / CIP 103999 / KCTC 2705 / NBRC 14298)).